A 386-amino-acid chain; its full sequence is Centrosomal protein of 44 kDa (386 aa).

The segment at 11 to 194 (RKLEQVLRSL…GVPEGTVTST (184 aa)) is binds with microtubules and centrioles. The stretch at 232–262 (ELTALQIALAECQEKLKKLTWIEKRLECLEA) forms a coiled coil. S329 carries the post-translational modification Phosphoserine. Positions 359-382 (SEETTMQKMERMKKMFEETAELLK) form a coiled coil.

As to quaternary structure, interacts with CROCC. Interacts with POC1B; the interaction is direct and recruits POC1B to centriolar microtubules. Binds to centriolar microtubules.

The protein resides in the cytoplasm. Its subcellular location is the cytoskeleton. It is found in the microtubule organizing center. The protein localises to the centrosome. It localises to the centriole. The protein resides in the spindle pole. Its subcellular location is the midbody. In terms of biological role, centriole-enriched microtubule-binding protein involved in centriole biogenesis. In collaboration with CEP295 and POC1B, is required for the centriole-to-centrosome conversion by ensuring the formation of bona fide centriole wall. Functions as a linker component that maintains centrosome cohesion. Associates with CROCC and regulates its stability and localization to the centrosome. This Rattus norvegicus (Rat) protein is Centrosomal protein of 44 kDa (Cep44).